A 559-amino-acid polypeptide reads, in one-letter code: Potassium-transporting ATPase potassium-binding subunit (559 aa).

12 helical membrane passes run 5 to 25, 63 to 83, 131 to 151, 173 to 193, 254 to 274, 282 to 302, 327 to 347, 356 to 376, 379 to 399, 416 to 436, 483 to 503, and 525 to 545; these read GFLLLASYLLVLLVLARPLGM, LLAILLFNALGGLALFALLML, VGLTVQNFLSAATGIAVVFAL, ITLWLLLPLSLLVALFFIQQG, VQMLAIFLIPTALCFAFGEVV, AILWAMTLIFILCVAVVMWAE, FGILASSLFAVITTAASCGAV, ALGGMVPMWLMQIGEVVFGGV, GLYGMLLFVMLAVFIAGLMVG, MIALAILVTPTLVLLGTALAM, LLLAFCMLVGRFAVIIPVMAI, and ALFIGLLIGTVLLVGALTFIP.

This sequence belongs to the KdpA family. As to quaternary structure, the system is composed of three essential subunits: KdpA, KdpB and KdpC.

The protein localises to the cell inner membrane. In terms of biological role, part of the high-affinity ATP-driven potassium transport (or Kdp) system, which catalyzes the hydrolysis of ATP coupled with the electrogenic transport of potassium into the cytoplasm. This subunit binds the periplasmic potassium ions and delivers the ions to the membrane domain of KdpB through an intramembrane tunnel. The chain is Potassium-transporting ATPase potassium-binding subunit from Klebsiella pneumoniae subsp. pneumoniae (strain ATCC 700721 / MGH 78578).